The chain runs to 346 residues: Very-long-chain 3-oxoacyl-CoA reductase (346 aa).

Residues 26 to 46 (TASVLLVAGGWFVVSRVWTFL) form a helical membrane-spanning segment. Positions 71, 126, 134, 153, 220, 224, 253, and 255 each coordinate NADP(+). The Proton donor role is filled by Tyr-220. Catalysis depends on Lys-224, which acts as the Lowers pKa of active site Tyr.

Belongs to the short-chain dehydrogenases/reductases (SDR) family.

The protein resides in the endoplasmic reticulum membrane. The enzyme catalyses a very-long-chain (3R)-3-hydroxyacyl-CoA + NADP(+) = a very-long-chain 3-oxoacyl-CoA + NADPH + H(+). The protein operates within lipid metabolism; fatty acid biosynthesis. Its function is as follows. Component of the microsomal membrane bound fatty acid elongation system, which produces the 26-carbon very long-chain fatty acids (VLCFA) from palmitate. Catalyzes the reduction of the 3-ketoacyl-CoA intermediate that is formed in each cycle of fatty acid elongation. VLCFAs serve as precursors for ceramide and sphingolipids. This Emericella nidulans (strain FGSC A4 / ATCC 38163 / CBS 112.46 / NRRL 194 / M139) (Aspergillus nidulans) protein is Very-long-chain 3-oxoacyl-CoA reductase.